A 378-amino-acid chain; its full sequence is Zinc finger protein DPF3 (378 aa).

Residue lysine 99 forms a Glycyl lysine isopeptide (Lys-Gly) (interchain with G-Cter in SUMO2) linkage. Residues 146–193 (LENDENVEEGNEEEDLEEDVPKRKNRTRGRARGSAGGRRRHDAASQED) form a disordered region. Residues 148-163 (NDENVEEGNEEEDLEE) are compositionally biased toward acidic residues. Positions 168–186 (RKNRTRGRARGSAGGRRRH) are enriched in basic residues. The C2H2-type zinc-finger motif lies at 198 to 221 (YVCDICGKRYKNRPGLSYHYAHTH). The tract at residues 225-254 (EEGDEAQDQETRSPPNHRNENHRPQKGPDG) is disordered. 2 PHD-type zinc fingers span residues 259–319 (NNYC…CKSC) and 316–366 (CKSC…CWEL). The tract at residues 317-332 (KSCILCGTSENDDQLL) is interaction with HDGFL2. Phosphoserine is present on glycine 323.

Belongs to the requiem/DPF family. As to quaternary structure, component of the BAF complex, which includes at least actin (ACTB), ARID1A, ARID1B/BAF250, SMARCA2, SMARCA4/BRG1/BAF190A, ACTL6A/BAF53, ACTL6B/BAF53B, SMARCE1/BAF57, SMARCC1/BAF155, SMARCC2/BAF170, SMARCB1/SNF5/INI1, and one or more of SMARCD1/BAF60A, SMARCD2/BAF60B, or SMARCD3/BAF60C. In muscle cells, the BAF complex also contains DPF3. Interacts with acetylated histones H3 and H4. Component of neuron-specific chromatin remodeling complex (nBAF complex) composed of at least, ARID1A/BAF250A or ARID1B/BAF250B, SMARCD1/BAF60A, SMARCD3/BAF60C, SMARCA2/BRM/BAF190B, SMARCA4/BRG1/BAF190A, SMARCB1/BAF47, SMARCC1/BAF155, SMARCE1/BAF57, SMARCC2/BAF170, DPF1/BAF45B, DPF3/BAF45C, ACTL6B/BAF53B and actin. Interacts with HDGFL2. Interacts with SMARCA4/BRG1/BAF190A, SMARCC1/BAF155 and SMARCD1/BAF60A. In terms of tissue distribution, expressed in the heart and somites. Expressed in cerebellum and spinal cord, but not in cerebral cortex. Expressed specifically in post-mitotic neurons (at protein level).

Its subcellular location is the nucleus. Functionally, muscle-specific component of the BAF complex, a multiprotein complex involved in transcriptional activation and repression of select genes by chromatin remodeling (alteration of DNA-nucleosome topology). Specifically binds acetylated lysines on histone 3 and 4 (H3K14ac, H3K9ac, H4K5ac, H4K8ac, H4K12ac, H4K16ac). In the complex, it acts as a tissue-specific anchor between histone acetylations and methylations and chromatin remodeling. It thereby probably plays an essential role in heart and skeletal muscle development. Belongs to the neuron-specific chromatin remodeling complex (nBAF complex). During neural development a switch from a stem/progenitor to a post-mitotic chromatin remodeling mechanism occurs as neurons exit the cell cycle and become committed to their adult state. The transition from proliferating neural stem/progenitor cells to post-mitotic neurons requires a switch in subunit composition of the npBAF and nBAF complexes. As neural progenitors exit mitosis and differentiate into neurons, npBAF complexes which contain ACTL6A/BAF53A and PHF10/BAF45A, are exchanged for homologous alternative ACTL6B/BAF53B and DPF1/BAF45B or DPF3/BAF45C subunits in neuron-specific complexes (nBAF). The npBAF complex is essential for the self-renewal/proliferative capacity of the multipotent neural stem cells. The nBAF complex along with CREST plays a role regulating the activity of genes essential for dendrite growth. Acts as a regulator of myogenesis in cooperation with HDGFL2. Mediates the interaction of HDGFL2 with the BAF complex. HDGFL2-DPF3a activate myogenic genes by increasing chromatin accessibility through recruitment of SMARCA4/BRG1/BAF190A (ATPase subunit of the BAF complex) to myogenic gene promoters. The protein is Zinc finger protein DPF3 (Dpf3) of Mus musculus (Mouse).